We begin with the raw amino-acid sequence, 438 residues long: Coenzyme A disulfide reductase (438 aa).

8–33 contacts FAD; that stretch reads GAVAGGATCASQIRRLDKESDIIIFE. Threonine 15, glutamine 19, arginine 22, serine 39, and asparagine 42 together coordinate substrate. The active-site Nucleophile is the cysteine 43. The Redox-active role is filled by cysteine 43. Position 71 (lysine 71) interacts with substrate. 151–166 contributes to the NADP(+) binding site; the sequence is VLVVGAGYVSLEVLEN. 267–277 contacts FAD; the sequence is TNVPNIYVIGD. Histidine 299 serves as a coordination point for substrate. Residue tyrosine 419 coordinates FAD. Lysine 427 contributes to the substrate binding site.

This sequence belongs to the class-III pyridine nucleotide-disulfide oxidoreductase family. In terms of assembly, homodimer. FAD is required as a cofactor.

The catalysed reaction is NADP(+) + 2 CoA = CoA-disulfide + NADPH + H(+). In terms of biological role, catalyzes specifically the NADPH-dependent reduction of coenzyme A disulfide. This is Coenzyme A disulfide reductase from Staphylococcus aureus (strain MRSA252).